We begin with the raw amino-acid sequence, 323 residues long: MPQIVVAALYKFVSLPDYQELQPGLLALCNAQGIKGTLLLAEEGINGTVAGSRAAIDALLTYLRQDSRMVDIDHKESFADEMPFYRMKVRLKKEIVTLGVPGISPNKKVGTYVKPEDWNTLISDPDVVVIDTRNNYEYEIGTFKGAIDPATTTFRQFPEFVRKNLDPAKNKKVAMFCTGGIRCEKASSYMLEQGFKEVYHLQGGILKYLETIPEEESLWEGECFVFDQRVAVKHGLQVGDYDQCFACRHPISAADMASSKYVKGISCPRCYDRMSAEKRARIAERQRQIEIARQRGEEHIGDNARQYSLIHKLSKTKKILPKT.

The region spanning 123-217 (SDPDVVVIDT…YLETIPEEES (95 aa)) is the Rhodanese domain. The active-site Cysteine persulfide intermediate is Cys177.

It belongs to the TrhO family.

The enzyme catalyses uridine(34) in tRNA + AH2 + O2 = 5-hydroxyuridine(34) in tRNA + A + H2O. Its function is as follows. Catalyzes oxygen-dependent 5-hydroxyuridine (ho5U) modification at position 34 in tRNAs. This chain is tRNA uridine(34) hydroxylase, found in Methylobacillus flagellatus (strain ATCC 51484 / DSM 6875 / VKM B-1610 / KT).